Reading from the N-terminus, the 439-residue chain is UPF0229 protein Nham_0975 (439 aa).

The segment at 39-106 (RSGRISDADG…AGTPDPSMKD (68 aa)) is disordered. The segment covering 58–76 (STDEPRFEAAKDSGRREHV) has biased composition (basic and acidic residues).

It belongs to the UPF0229 family.

The protein is UPF0229 protein Nham_0975 of Nitrobacter hamburgensis (strain DSM 10229 / NCIMB 13809 / X14).